The sequence spans 291 residues: Porphobilinogen deaminase (291 aa).

Position 237 is an S-(dipyrrolylmethanemethyl)cysteine (Cys-237).

Belongs to the HMBS family. In terms of assembly, monomer. Dipyrromethane serves as cofactor.

The catalysed reaction is 4 porphobilinogen + H2O = hydroxymethylbilane + 4 NH4(+). The protein operates within porphyrin-containing compound metabolism; protoporphyrin-IX biosynthesis; coproporphyrinogen-III from 5-aminolevulinate: step 2/4. Tetrapolymerization of the monopyrrole PBG into the hydroxymethylbilane pre-uroporphyrinogen in several discrete steps. This Clostridium perfringens (strain ATCC 13124 / DSM 756 / JCM 1290 / NCIMB 6125 / NCTC 8237 / Type A) protein is Porphobilinogen deaminase.